Here is a 400-residue protein sequence, read N- to C-terminus: Enoyl-[acyl-carrier-protein] reductase [NADH] (400 aa).

NAD(+) contacts are provided by residues 48–53 (GASTGY), 74–75 (FE), 111–112 (DA), and 139–140 (LA). Residue Y225 participates in substrate binding. Y235 (proton donor) is an active-site residue. Residues K244 and 273–275 (VVT) contribute to the NAD(+) site.

Belongs to the TER reductase family. As to quaternary structure, monomer.

It carries out the reaction a 2,3-saturated acyl-[ACP] + NAD(+) = a (2E)-enoyl-[ACP] + NADH + H(+). The protein operates within lipid metabolism; fatty acid biosynthesis. Functionally, involved in the final reduction of the elongation cycle of fatty acid synthesis (FAS II). Catalyzes the reduction of a carbon-carbon double bond in an enoyl moiety that is covalently linked to an acyl carrier protein (ACP). The chain is Enoyl-[acyl-carrier-protein] reductase [NADH] from Burkholderia cenocepacia (strain HI2424).